Here is a 145-residue protein sequence, read N- to C-terminus: D-aminoacyl-tRNA deacylase (145 aa).

The Gly-cisPro motif, important for rejection of L-amino acids motif lies at 137–138 (GP).

The protein belongs to the DTD family. Homodimer.

It is found in the cytoplasm. The enzyme catalyses glycyl-tRNA(Ala) + H2O = tRNA(Ala) + glycine + H(+). The catalysed reaction is a D-aminoacyl-tRNA + H2O = a tRNA + a D-alpha-amino acid + H(+). An aminoacyl-tRNA editing enzyme that deacylates mischarged D-aminoacyl-tRNAs. Also deacylates mischarged glycyl-tRNA(Ala), protecting cells against glycine mischarging by AlaRS. Acts via tRNA-based rather than protein-based catalysis; rejects L-amino acids rather than detecting D-amino acids in the active site. By recycling D-aminoacyl-tRNA to D-amino acids and free tRNA molecules, this enzyme counteracts the toxicity associated with the formation of D-aminoacyl-tRNA entities in vivo and helps enforce protein L-homochirality. This chain is D-aminoacyl-tRNA deacylase, found in Lactobacillus gasseri (strain ATCC 33323 / DSM 20243 / BCRC 14619 / CIP 102991 / JCM 1131 / KCTC 3163 / NCIMB 11718 / NCTC 13722 / AM63).